The sequence spans 968 residues: Breast cancer anti-estrogen resistance protein 1 (968 aa).

Met1 carries the post-translational modification N-acetylmethionine. One can recognise an SH3 domain in the interval Asp97–Gly159. The tract at residues Lys164–Tyr277 is disordered. The span at Ala167–Ser182 shows a compositional bias: pro residues. A substrate for kinases region spans residues Tyr213–Ala514. A Phosphotyrosine; by SRC modification is found at Tyr226. The segment covering Pro233–Gln249 has biased composition (polar residues). Phosphoserine is present on Ser237. Tyr332 is modified (phosphotyrosine). Tyr347 carries the phosphotyrosine; by ABL1 modification. At Thr367 the chain carries Phosphothreonine. Position 390 is a phosphoserine (Ser390). Residues Lys393 to Asp416 form a disordered region. Tyr460, Tyr470, and Tyr508 each carry phosphotyrosine. Disordered regions lie at residues Ile503–Val544 and Arg705–Gly756. Residues Ala514–Arg524 show a composition bias toward basic and acidic residues. Over residues Leu525–Leu542 the composition is skewed to low complexity. Ser526, Ser535, and Ser737 each carry phosphoserine. Polar residues predominate over residues Gly715–Asn753. The SH3-binding signature appears at Arg733–Phe741. A divergent helix-loop-helix motif region spans residues Phe844–Gly894.

It belongs to the CAS family. In terms of assembly, forms complexes in vivo with PTK2/FAK1, adapter protein CRKL and LYN kinase. Can heterodimerize with NEDD9. Component of a complex comprised of SH2D3C, BCAR1/CAS, and CRK. Within the complex, interacts with SH2D3C (via C-terminus), and CRK. Part of a complex comprised of PTPRA, BCAR1, BCAR3 (via SH2 domain) and SRC; the formation of the complex is dependent on integrin mediated-tyrosine phosphorylation of PTPRA. Interacts with BCAR3 (via Ras-GEF domain); the interaction regulates adhesion-dependent serine phosphorylation. Interacts with SMAD2 and SMAD3. Interacts with NPHP1. Interacts with PTK2B/PYK2. Interacts (via C-terminus) with SH2D3C/CHAT isoform 2 (via C-terminus). Interacts with activated CSPG4. Interacts with BMX, INPPL1/SHIP2 and PEAK1. Part of a collagen stimulated complex involved in cell migration composed of CDC42, CRK, TNK2 and BCAR1/p130cas. Interacts with TNK2 via SH3 domains. Interacts with PTK2B/PYK2. Interacts (when tyrosine-phosphorylated) with tensin TNS1; the interaction is increased by phosphorylation of TNS1. In terms of processing, PTK2/FAK1 activation mediates phosphorylation at the YDYVHL motif; phosphorylation is most likely catalyzed by SRC family members. SRC-family kinases are recruited to the phosphorylated sites and can phosphorylate other tyrosine residues. Tyrosine phosphorylation is triggered by integrin mediated adhesion of cells to the extracellular matrix. Post-translationally, phosphorylated by SRC kinase in a EDN1- and PTK2B-mediated manner; phosphorylation strengthens its interaction with BCAR3 as part of the PTK2B/BCAR1/BCAR3/RAP1 signaling pathway. Dephosphorylated by PTPN14 at Tyr-226. Widely expressed. Higher expression in lung, intestine and testis.

The protein resides in the cell junction. The protein localises to the focal adhesion. Its subcellular location is the cytoplasm. It is found in the cell projection. It localises to the axon. Docking protein which plays a central coordinating role for tyrosine-kinase-based signaling related to cell adhesion. Implicated in induction of cell migration and cell branching. Involved in the BCAR3-mediated inhibition of TGFB signaling. The sequence is that of Breast cancer anti-estrogen resistance protein 1 (Bcar1) from Rattus norvegicus (Rat).